A 224-amino-acid polypeptide reads, in one-letter code: 7-cyano-7-deazaguanine synthase (224 aa).

10 to 20 provides a ligand contact to ATP; it reads FSGGQDSTTCL. Positions 193, 201, 204, and 207 each coordinate Zn(2+).

It belongs to the QueC family. Zn(2+) serves as cofactor.

The catalysed reaction is 7-carboxy-7-deazaguanine + NH4(+) + ATP = 7-cyano-7-deazaguanine + ADP + phosphate + H2O + H(+). It participates in purine metabolism; 7-cyano-7-deazaguanine biosynthesis. In terms of biological role, catalyzes the ATP-dependent conversion of 7-carboxy-7-deazaguanine (CDG) to 7-cyano-7-deazaguanine (preQ(0)). The protein is 7-cyano-7-deazaguanine synthase of Neisseria gonorrhoeae (strain ATCC 700825 / FA 1090).